We begin with the raw amino-acid sequence, 475 residues long: Peroxisome proliferator-activated receptor gamma (475 aa).

Serine 82 is modified (phosphoserine; by MAPK). Positions 106–180 (AIECRVCSDK…VGMSHNAIRF (75 aa)) form a DNA-binding region, nuclear receptor. NR C4-type zinc fingers lie at residues 109-129 (CRVC…CEGC) and 146-168 (CDLN…FQKC). The interval 175–250 (HNAIRFGRMP…DKSPFVIYDM (76 aa)) is interaction with FAM120B. One can recognise an NR LBD domain in the interval 208-473 (DLRALAKHLY…HPLLQEIYKD (266 aa)). Lysine 222 is covalently cross-linked (Glycyl lysine isopeptide (Lys-Gly) (interchain with G-Cter in ubiquitin)). Residues 465-473 (PLLQEIYKD) carry the 9aaTAD motif.

Belongs to the nuclear hormone receptor family. NR1 subfamily. As to quaternary structure, interacts with FOXO1 (acetylated form). Heterodimer with other nuclear receptors, such as RXRA. The heterodimer with the retinoic acid receptor RXRA is called adipocyte-specific transcription factor ARF6. Interacts with NCOA6 coactivator, leading to a strong increase in transcription of target genes. Interacts with coactivator PPARBP, leading to a mild increase in transcription of target genes. Interacts with NOCA7 in a ligand-inducible manner. Interacts with NCOA1 and NCOA2 LXXLL motifs. Interacts with ASXL1, ASXL2, DNTTIP2, FAM120B, MAP2K1/MEK1, NR0B2, PDPK1, PRDM16, PRMT2 and TGFB1I1. Interacts (when activated by agonist) with PPP5C. Interacts with HELZ2 and THRAP3; the interaction stimulates the transcriptional activity of PPARG. Interacts with PER2, the interaction is ligand dependent and blocks PPARG recruitment to target promoters. Interacts with NOCT. Interacts with ACTN4. Interacts (when in the liganded conformation) with GPS2. Interacts with CRY1 and CRY2 in a ligand-dependent manner. In the absence of hormonal ligand, interacts with TACC1. In macrophages, interacts with PAQR3 and STUB1; the interactions promote PPARG poylubiquitination and STUB1-mediated degradation. In terms of processing, phosphorylated at basal conditions and dephosphorylated when treated with the ligand. May be dephosphorylated by PPP5C. The phosphorylated form may be inactive and dephosphorylation induces adipogenic activity. Post-translationally, ubiquitinated by E3 ubiquitin-protein ligase complex containing FBXO9; leading to proteasomal degradation. Ubiquitinated at Lys-222 by TRIM55 leading to proteasomal degradation. Ubiquitinated by E3 ubiquitin-protein ligase STUB1/CHIP; leading to proteasomal degradation.

Its subcellular location is the nucleus. The protein localises to the cytoplasm. Its activity is regulated as follows. PDPK1 activates its transcriptional activity independently of its kinase activity. Nuclear receptor that binds peroxisome proliferators such as hypolipidemic drugs and fatty acids. Once activated by a ligand, the nuclear receptor binds to DNA specific PPAR response elements (PPRE) and modulates the transcription of its target genes, such as acyl-CoA oxidase. It therefore controls the peroxisomal beta-oxidation pathway of fatty acids. Key regulator of adipocyte differentiation and glucose homeostasis. ARF6 acts as a key regulator of the tissue-specific adipocyte P2 (aP2) enhancer. Acts as a critical regulator of gut homeostasis by suppressing NF-kappa-B-mediated pro-inflammatory responses. Plays a role in the regulation of cardiovascular circadian rhythms by regulating the transcription of BMAL1 in the blood vessels. This chain is Peroxisome proliferator-activated receptor gamma (PPARG), found in Oryctolagus cuniculus (Rabbit).